A 914-amino-acid chain; its full sequence is DNA mismatch repair protein MutS (914 aa).

The segment at 1–24 (MDNKTDNKNNLTPQSAPSSAPHKE) is disordered. Positions 8–18 (KNNLTPQSAPS) are enriched in polar residues. 662–669 (GPNMGGKS) is a binding site for ATP.

The protein belongs to the DNA mismatch repair MutS family.

In terms of biological role, this protein is involved in the repair of mismatches in DNA. It is possible that it carries out the mismatch recognition step. This protein has a weak ATPase activity. This Bartonella henselae (strain ATCC 49882 / DSM 28221 / CCUG 30454 / Houston 1) (Rochalimaea henselae) protein is DNA mismatch repair protein MutS.